A 291-amino-acid polypeptide reads, in one-letter code: N-acetylmannosamine kinase (291 aa).

ATP is bound by residues 5–12 and 132–139; these read AIDIGGTK and GVGGGVVC. Positions 156, 166, 168, and 173 each coordinate Zn(2+).

The protein belongs to the ROK (NagC/XylR) family. NanK subfamily. In terms of assembly, homodimer.

It carries out the reaction an N-acyl-D-mannosamine + ATP = an N-acyl-D-mannosamine 6-phosphate + ADP + H(+). It participates in amino-sugar metabolism; N-acetylneuraminate degradation; D-fructose 6-phosphate from N-acetylneuraminate: step 2/5. Its function is as follows. Catalyzes the phosphorylation of N-acetylmannosamine (ManNAc) to ManNAc-6-P. This is N-acetylmannosamine kinase from Salmonella paratyphi A (strain ATCC 9150 / SARB42).